The chain runs to 349 residues: Nuclear distribution protein nudE homolog 1 (349 aa).

The stretch at 23–189 (AMKYKTCSEE…ELAVQQKQEK (167 aa)) forms a coiled coil. Positions 182–201 (AVQQKQEKPKSNMGSPETER) are disordered.

It belongs to the nudE family. Self-associates. Interacts with pafah1b1. Post-translationally, phosphorylated in mitosis.

It is found in the cytoplasm. The protein localises to the cytoskeleton. It localises to the microtubule organizing center. Its subcellular location is the centrosome. The protein resides in the spindle. It is found in the chromosome. The protein localises to the centromere. It localises to the kinetochore. Its subcellular location is the cleavage furrow. The protein resides in the cytoplasmic vesicle membrane. Its function is as follows. Required for centrosome duplication and formation and function of the mitotic spindle. This is Nuclear distribution protein nudE homolog 1 (nde1) from Xenopus tropicalis (Western clawed frog).